The sequence spans 544 residues: POTE ankyrin domain family member B2 (544 aa).

ANK repeat units follow at residues 135 to 167 (QKRT…VLDN), 168 to 200 (KKRT…IQDE), 201 to 233 (YGNT…SKNK), 234 to 266 (CGLT…ALDR), and 267 to 299 (YGRT…SQDL). Residues 332 to 457 (SSENSNPEQD…NTGISQDEIL (126 aa)) are disordered. 2 stretches are compositionally biased toward basic and acidic residues: residues 340–355 (QDLK…RLKV) and 364–375 (MSQEPEINKDCD). Positions 439 to 457 (TQKQLSEEQNTGISQDEIL) are enriched in polar residues.

This sequence belongs to the POTE family.

The chain is POTE ankyrin domain family member B2 (POTEB2) from Homo sapiens (Human).